The sequence spans 367 residues: MVTQILGAMESQVGGGPAGPALPNGPLLGTNGATDDSKTNLIVNYLPQNMTQDEFKSLFGSIGDIESCKLVRDKITGQSLGYGFVNYSDPNDADKAINTLNGLKLQTKTIKVSYARPSSASIRDANLYVSGLPKTMSQKEMEQLFSQYGRIITSRILVDQVTGVSRGVGFIRFDKRIEAEEAIKGLNGQKPLGAAEPITVKFANNPSQKTGQALLTHLYQSSARRYAGPLHHQTQRFRLDNLLNMAYGVKSPLSLIARFSPIAIDGMSGLAGVGLSGGAAGAGWCIFVYNLSPEADESVLWQLFGPFGAVTNVKVIRDFTTNKCKGFGFVTMTNYDEAAMAIASLNGYRLGERVLQVSFKTSKQHKA.

3 RRM domains span residues 39–117 (TNLI…YARP), 125–205 (ANLY…FANN), and 284–362 (WCIF…FKTS).

Belongs to the RRM elav family. Interacts with MAP1B light chain LC1. Brain specific.

RNA-binding protein that binds to AU-rich element (ARE) sequences of target mRNAs, including VEGF mRNA. May also bind poly-A tracts via RRM 3. May be involved in neuronal differentiation and maintenance. Plays a role in the stabilization of GAP43 mRNA and in spatial learning. In Homo sapiens (Human), this protein is ELAV-like protein 3 (ELAVL3).